A 131-amino-acid chain; its full sequence is Agouti-related protein (131 aa).

Residues 1-20 form the signal peptide; it reads MLTAMLLSCVLLLALPPTLG. A propeptide spanning residues 21–81 is cleaved from the precursor; it reads VQMGVAPLKG…VLDPQNRESR (61 aa). Cystine bridges form between cysteine 86–cysteine 101, cysteine 93–cysteine 107, cysteine 100–cysteine 118, cysteine 104–cysteine 128, and cysteine 109–cysteine 116. One can recognise an Agouti domain in the interval 86 to 128; sequence CVRLHESCLGQQVPCCDPCATCYCRFFNAFCYCRKLGTATNLC. Positions 110–112 are interaction with melanocortin receptors; sequence RFF.

As to quaternary structure, interacts with melanocortin receptors MC3R, MC4R and MC5R. Expressed in arcuate nucleus and median eminence, adrenal gland (medulla), hypothalamus, testis, and lung.

The protein localises to the secreted. It localises to the golgi apparatus lumen. Its function is as follows. Plays a role in weight homeostasis. Involved in the control of feeding behavior through the central melanocortin system. Acts as alpha melanocyte-stimulating hormone antagonist by inhibiting cAMP production mediated by stimulation of melanocortin receptors within the hypothalamus and adrenal gland. Has very low activity with MC5R. Is an inverse agonist for MC3R and MC4R being able to suppress their constitutive activity. It promotes MC3R and MC4R endocytosis in an arrestin-dependent manner. This is Agouti-related protein (Agrp) from Mus musculus (Mouse).